The following is a 601-amino-acid chain: Elongation factor 4 (601 aa).

Residues 7 to 189 (SLIRNFSIIA…ALVTRLPPPV (183 aa)) enclose the tr-type G domain. GTP contacts are provided by residues 19 to 24 (DHGKST) and 136 to 139 (NKVD).

It belongs to the TRAFAC class translation factor GTPase superfamily. Classic translation factor GTPase family. LepA subfamily.

It localises to the cell inner membrane. The enzyme catalyses GTP + H2O = GDP + phosphate + H(+). Required for accurate and efficient protein synthesis under certain stress conditions. May act as a fidelity factor of the translation reaction, by catalyzing a one-codon backward translocation of tRNAs on improperly translocated ribosomes. Back-translocation proceeds from a post-translocation (POST) complex to a pre-translocation (PRE) complex, thus giving elongation factor G a second chance to translocate the tRNAs correctly. Binds to ribosomes in a GTP-dependent manner. This Gluconacetobacter diazotrophicus (strain ATCC 49037 / DSM 5601 / CCUG 37298 / CIP 103539 / LMG 7603 / PAl5) protein is Elongation factor 4.